The following is a 439-amino-acid chain: Xaa-Pro dipeptidase (439 aa).

Mn(2+) contacts are provided by Asp244, Asp255, His335, Glu380, and Glu419.

This sequence belongs to the peptidase M24B family. Bacterial-type prolidase subfamily. Mn(2+) serves as cofactor.

It catalyses the reaction Xaa-L-Pro dipeptide + H2O = an L-alpha-amino acid + L-proline. In terms of biological role, splits dipeptides with a prolyl residue in the C-terminal position. In Shewanella sp. (strain MR-7), this protein is Xaa-Pro dipeptidase.